The sequence spans 131 residues: Small ribosomal subunit protein uS8 (131 aa).

Belongs to the universal ribosomal protein uS8 family. Part of the 30S ribosomal subunit. Contacts proteins S5 and S12.

Its function is as follows. One of the primary rRNA binding proteins, it binds directly to 16S rRNA central domain where it helps coordinate assembly of the platform of the 30S subunit. This chain is Small ribosomal subunit protein uS8, found in Cupriavidus metallidurans (strain ATCC 43123 / DSM 2839 / NBRC 102507 / CH34) (Ralstonia metallidurans).